The chain runs to 76 residues: ATP synthase subunit 9, mitochondrial (76 aa).

Transmembrane regions (helical) follow at residues 14-34 and 52-72; these read IATIGLLGAGIGIAIVFAALI and ILGFALSEATGLFCLMISFLL.

This sequence belongs to the ATPase C chain family. F-type ATPases have 2 components, CF(1) - the catalytic core - and CF(0) - the membrane proton channel. CF(1) has five subunits: alpha(3), beta(3), gamma(1), delta(1), epsilon(1). CF(0) has three main subunits: a, b and c.

It localises to the mitochondrion membrane. Functionally, mitochondrial membrane ATP synthase (F(1)F(0) ATP synthase or Complex V) produces ATP from ADP in the presence of a proton gradient across the membrane which is generated by electron transport complexes of the respiratory chain. F-type ATPases consist of two structural domains, F(1) - containing the extramembraneous catalytic core and F(0) - containing the membrane proton channel, linked together by a central stalk and a peripheral stalk. During catalysis, ATP synthesis in the catalytic domain of F(1) is coupled via a rotary mechanism of the central stalk subunits to proton translocation. Part of the complex F(0) domain. A homomeric c-ring of probably 10 subunits is part of the complex rotary element. The sequence is that of ATP synthase subunit 9, mitochondrial (ATP9) from Wickerhamomyces canadensis (Yeast).